Here is a 296-residue protein sequence, read N- to C-terminus: uncharacterized protein (296 aa).

Residues 7 to 26 (CFSLVCALGASTYLLWRGWL) traverse the membrane as a helical segment.

It localises to the membrane. This is an uncharacterized protein from Treponema pallidum (strain Nichols).